A 487-amino-acid polypeptide reads, in one-letter code: MIKTLDLVPVLPEIFMAVAGLALLMLGVFRKEDSTKSVSVLVILALGAAMVLVSSLGGERLTAFNGLFVADRFAGFAKGLVLVASAIATAMSLPYLEREKIGRFEYPVLVLFATLGMMMMISANDFIALYLGLELQSLALYVLAAYNRDNARATEAGLKYFVLGSLASGLLLYGISLLYGFAGTTSFEGLANLFAGGHDHPIKPNMGIIAGLVFVLAGLSFKVSAVPFHMWAPDVYEGAPTPVTSFFAVAPKIAALCLLVRVMTGPFADLVEQWRQVVTFIAIGSMFVGSFAAVVQTNIKRLMAYSSIGHVGFVLVGIAAGSTLGIQGVLIYLAIYLFMNVGAFAVILSMRQKGRMVEGIDDLAGLSKTHPMMAFVMAVLMFSMAGVPPLAGFWGKFYVFMAAIESGLYTLSILGVLSSVVSTYYYLRIVKVMYFDEPVEAFDKPVGTSMTLVMAVSTIVILAFTLIPAPLVTSAKAAAQVLFPAAG.

A run of 13 helical transmembrane segments spans residues 9–29 (PVLP…LGVF), 38–58 (VSVL…SLGG), 73–93 (FAGF…AMSL), 108–128 (VLVL…DFIA), 161–181 (FVLG…LYGF), 208–228 (IIAG…AVPF), 240–260 (PTPV…CLLV), 277–297 (VVTF…VVQT), 306–326 (SSIG…TLGI), 328–348 (GVLI…AVIL), 374–394 (AFVM…AGFW), 408–430 (LYTL…LRIV), and 452–472 (LVMA…APLV).

It belongs to the complex I subunit 2 family. NDH-1 is composed of 14 different subunits. Subunits NuoA, H, J, K, L, M, N constitute the membrane sector of the complex.

The protein localises to the cell inner membrane. It carries out the reaction a quinone + NADH + 5 H(+)(in) = a quinol + NAD(+) + 4 H(+)(out). Functionally, NDH-1 shuttles electrons from NADH, via FMN and iron-sulfur (Fe-S) centers, to quinones in the respiratory chain. The immediate electron acceptor for the enzyme in this species is believed to be ubiquinone. Couples the redox reaction to proton translocation (for every two electrons transferred, four hydrogen ions are translocated across the cytoplasmic membrane), and thus conserves the redox energy in a proton gradient. The protein is NADH-quinone oxidoreductase subunit N of Paramagnetospirillum magneticum (strain ATCC 700264 / AMB-1) (Magnetospirillum magneticum).